The chain runs to 562 residues: Bifunctional coenzyme A synthase (562 aa).

Serine 177 and serine 182 each carry phosphoserine. Residues 179–357 (VARSAKQPVR…HKRPELPPGC (179 aa)) are phosphopantetheine adenylyltransferase. Residues 359–562 (VIGLTGISGS…KRISEAPSDP (204 aa)) form the DPCK domain. 364 to 371 (GISGSGKS) contacts ATP.

In the central section; belongs to the eukaryotic CoaD family. Monomer. In terms of processing, the N-terminus is blocked.

The protein resides in the cytoplasm. The protein localises to the mitochondrion matrix. The enzyme catalyses (R)-4'-phosphopantetheine + ATP + H(+) = 3'-dephospho-CoA + diphosphate. It catalyses the reaction 3'-dephospho-CoA + ATP = ADP + CoA + H(+). It participates in cofactor biosynthesis; coenzyme A biosynthesis; CoA from (R)-pantothenate: step 4/5. Its pathway is cofactor biosynthesis; coenzyme A biosynthesis; CoA from (R)-pantothenate: step 5/5. Its function is as follows. Bifunctional enzyme that catalyzes the fourth and fifth sequential steps of CoA biosynthetic pathway. The fourth reaction is catalyzed by the phosphopantetheine adenylyltransferase, coded by the coaD domain; the fifth reaction is catalyzed by the dephospho-CoA kinase, coded by the coaE domain. May act as a point of CoA biosynthesis regulation. This chain is Bifunctional coenzyme A synthase, found in Sus scrofa (Pig).